The primary structure comprises 604 residues: Deuterosome assembly protein 1 (604 aa).

Coiled coils occupy residues 14–59, 85–197, 226–278, and 336–399; these read CEAE…NAQT, MTQN…GKKQ, IIEK…ELQS, and QDQP…KQLK. Residue Ser547 is modified to Phosphoserine. A coiled-coil region spans residues 558-601; that stretch reads AAQHFLLEEEKRAKELEKLLNTHIDELQRHTEFTLNKYSKLKQN.

The protein belongs to the CEP63 family. As to quaternary structure, interacts with CEP152; the interaction is mutually exclusive with CEP63.

Its subcellular location is the cytoplasm. Functionally, key structural component of the deuterosome, a structure that promotes de novo centriole amplification in multiciliated cells. Deuterosome-mediated centriole amplification occurs in terminally differentiated multiciliated cells and can generate more than 100 centrioles. Probably sufficient for the specification and formation of the deuterosome inner core. Interacts with CEP152 and recruits PLK4 to activate centriole biogenesis. This is Deuterosome assembly protein 1 from Homo sapiens (Human).